Consider the following 468-residue polypeptide: Argininosuccinate lyase (468 aa).

This sequence belongs to the lyase 1 family. Argininosuccinate lyase subfamily.

Its subcellular location is the cytoplasm. It carries out the reaction 2-(N(omega)-L-arginino)succinate = fumarate + L-arginine. Its pathway is amino-acid biosynthesis; L-arginine biosynthesis; L-arginine from L-ornithine and carbamoyl phosphate: step 3/3. The polypeptide is Argininosuccinate lyase (Methanothermobacter thermautotrophicus (strain ATCC 29096 / DSM 1053 / JCM 10044 / NBRC 100330 / Delta H) (Methanobacterium thermoautotrophicum)).